The primary structure comprises 118 residues: Probable dihydroneopterin aldolase (118 aa).

Residues glutamate 21, tyrosine 53, and 72 to 73 each bind substrate; that span reads IE. Residue lysine 98 is the Proton donor/acceptor of the active site.

It belongs to the DHNA family.

It carries out the reaction 7,8-dihydroneopterin = 6-hydroxymethyl-7,8-dihydropterin + glycolaldehyde. The protein operates within cofactor biosynthesis; tetrahydrofolate biosynthesis; 2-amino-4-hydroxy-6-hydroxymethyl-7,8-dihydropteridine diphosphate from 7,8-dihydroneopterin triphosphate: step 3/4. Functionally, catalyzes the conversion of 7,8-dihydroneopterin to 6-hydroxymethyl-7,8-dihydropterin. The chain is Probable dihydroneopterin aldolase (folB) from Synechocystis sp. (strain ATCC 27184 / PCC 6803 / Kazusa).